Reading from the N-terminus, the 70-residue chain is Exodeoxyribonuclease 7 small subunit (70 aa).

It belongs to the XseB family. As to quaternary structure, heterooligomer composed of large and small subunits.

It localises to the cytoplasm. It carries out the reaction Exonucleolytic cleavage in either 5'- to 3'- or 3'- to 5'-direction to yield nucleoside 5'-phosphates.. Functionally, bidirectionally degrades single-stranded DNA into large acid-insoluble oligonucleotides, which are then degraded further into small acid-soluble oligonucleotides. This Streptococcus sanguinis (strain SK36) protein is Exodeoxyribonuclease 7 small subunit.